A 166-amino-acid chain; its full sequence is ATP synthase subunit b (166 aa).

A helical transmembrane segment spans residues 15 to 37 (TLYYLLIFAALLLLVKHFAWGPV).

The protein belongs to the ATPase B chain family. F-type ATPases have 2 components, F(1) - the catalytic core - and F(0) - the membrane proton channel. F(1) has five subunits: alpha(3), beta(3), gamma(1), delta(1), epsilon(1). F(0) has three main subunits: a(1), b(2) and c(10-14). The alpha and beta chains form an alternating ring which encloses part of the gamma chain. F(1) is attached to F(0) by a central stalk formed by the gamma and epsilon chains, while a peripheral stalk is formed by the delta and b chains.

The protein localises to the cell membrane. Its function is as follows. F(1)F(0) ATP synthase produces ATP from ADP in the presence of a proton or sodium gradient. F-type ATPases consist of two structural domains, F(1) containing the extramembraneous catalytic core and F(0) containing the membrane proton channel, linked together by a central stalk and a peripheral stalk. During catalysis, ATP synthesis in the catalytic domain of F(1) is coupled via a rotary mechanism of the central stalk subunits to proton translocation. Component of the F(0) channel, it forms part of the peripheral stalk, linking F(1) to F(0). The polypeptide is ATP synthase subunit b (Lactobacillus johnsonii (strain CNCM I-12250 / La1 / NCC 533)).